The sequence spans 384 residues: N-acetylneuraminate epimerase (384 aa).

Residues 1–29 (MGMQMKNFKKMMTLMALCLSVAITTSGYA) form the signal peptide. 7 Kelch repeats span residues 51–95 (VIYV…VFLN), 97–149 (ELYV…VKLN), 151–184 (TMVL…KVIY), 185–230 (NYFN…VMEN), 233–282 (LMLI…LAGA), 304–353 (QNYT…SYGD), and 355–384 (VFLI…LLIK). The active-site Proton acceptor is the Glu-239.

It belongs to the NanM family. Homodimer.

The protein resides in the periplasm. The enzyme catalyses N-acetyl-alpha-neuraminate = N-acetyl-beta-neuraminate. Functionally, converts alpha-N-acetylneuranimic acid (Neu5Ac) to the beta-anomer, accelerating the equilibrium between the alpha- and beta-anomers. Probably facilitates sialidase-negative bacteria to compete successfully for limited amounts of extracellular Neu5Ac, which is likely taken up in the beta-anomer. In addition, the rapid removal of sialic acid from solution might be advantageous to the bacterium to damp down host responses. The polypeptide is N-acetylneuraminate epimerase (Salmonella enteritidis PT4 (strain P125109)).